Here is a 663-residue protein sequence, read N- to C-terminus: Beta-galactosidase YesZ (663 aa).

R107 serves as a coordination point for substrate. Residue C111 coordinates Zn(2+). Substrate is bound at residue N145. E146 functions as the Proton donor in the catalytic mechanism. Zn(2+) is bound by residues C154, C156, and C159. The active-site Nucleophile is the E297. Residue 346-349 (EQPH) participates in substrate binding.

Belongs to the glycosyl hydrolase 42 family. As to quaternary structure, homotrimer.

The enzyme catalyses Hydrolysis of terminal non-reducing beta-D-galactose residues in beta-D-galactosides.. Functionally, may play a role in the degradation of rhamnogalacturonan derived from plant cell walls. In Bacillus licheniformis (strain ATCC 14580 / DSM 13 / JCM 2505 / CCUG 7422 / NBRC 12200 / NCIMB 9375 / NCTC 10341 / NRRL NRS-1264 / Gibson 46), this protein is Beta-galactosidase YesZ (yesZ).